The primary structure comprises 364 residues: Heat-inducible transcription repressor HrcA (364 aa).

Belongs to the HrcA family.

Its function is as follows. Negative regulator of class I heat shock genes (grpE-dnaK-dnaJ and groELS operons). Prevents heat-shock induction of these operons. The sequence is that of Heat-inducible transcription repressor HrcA from Cyanothece sp. (strain PCC 7425 / ATCC 29141).